A 498-amino-acid chain; its full sequence is Guanosine-5'-triphosphate,3'-diphosphate pyrophosphatase (498 aa).

It belongs to the GppA/Ppx family. GppA subfamily.

It carries out the reaction guanosine 3'-diphosphate 5'-triphosphate + H2O = guanosine 3',5'-bis(diphosphate) + phosphate + H(+). It participates in purine metabolism; ppGpp biosynthesis; ppGpp from GTP: step 2/2. In terms of biological role, catalyzes the conversion of pppGpp to ppGpp. Guanosine pentaphosphate (pppGpp) is a cytoplasmic signaling molecule which together with ppGpp controls the 'stringent response', an adaptive process that allows bacteria to respond to amino acid starvation, resulting in the coordinated regulation of numerous cellular activities. In Yersinia enterocolitica serotype O:8 / biotype 1B (strain NCTC 13174 / 8081), this protein is Guanosine-5'-triphosphate,3'-diphosphate pyrophosphatase.